The sequence spans 174 residues: Shikimate kinase 2 (174 aa).

12-17 (GCGKTT) serves as a coordination point for ATP. Mg(2+) is bound by residues T16 and D32. Positions 34, 58, and 79 each coordinate substrate. Residues 112-126 (QAAPEEDLRPTLTGK) form an LID domain region. R120 is a binding site for ATP. R139 contributes to the substrate binding site.

It belongs to the shikimate kinase family. AroL subfamily. Monomer. Requires Mg(2+) as cofactor.

The protein localises to the cytoplasm. It catalyses the reaction shikimate + ATP = 3-phosphoshikimate + ADP + H(+). It participates in metabolic intermediate biosynthesis; chorismate biosynthesis; chorismate from D-erythrose 4-phosphate and phosphoenolpyruvate: step 5/7. Catalyzes the specific phosphorylation of the 3-hydroxyl group of shikimic acid using ATP as a cosubstrate. This chain is Shikimate kinase 2, found in Shigella boydii serotype 4 (strain Sb227).